A 355-amino-acid chain; its full sequence is Tetraacyldisaccharide 4'-kinase (355 aa).

64-71 serves as a coordination point for ATP; it reads YVGGTGKT. A disordered region spans residues 206 to 226; it reads NRAPQSSATPTAASGQGPRRA. Positions 208–222 are enriched in low complexity; that stretch reads APQSSATPTAASGQG.

Belongs to the LpxK family.

The enzyme catalyses a lipid A disaccharide + ATP = a lipid IVA + ADP + H(+). Its pathway is glycolipid biosynthesis; lipid IV(A) biosynthesis; lipid IV(A) from (3R)-3-hydroxytetradecanoyl-[acyl-carrier-protein] and UDP-N-acetyl-alpha-D-glucosamine: step 6/6. Its function is as follows. Transfers the gamma-phosphate of ATP to the 4'-position of a tetraacyldisaccharide 1-phosphate intermediate (termed DS-1-P) to form tetraacyldisaccharide 1,4'-bis-phosphate (lipid IVA). The protein is Tetraacyldisaccharide 4'-kinase of Bordetella petrii (strain ATCC BAA-461 / DSM 12804 / CCUG 43448).